Here is a 540-residue protein sequence, read N- to C-terminus: UDP-N-acetylmuramyl-tripeptide synthetase (540 aa).

Ser-33 lines the UDP-N-acetyl-alpha-D-muramoyl-L-alanyl-D-glutamate pocket. Residue 114–120 (GTEGKSS) participates in ATP binding. UDP-N-acetyl-alpha-D-muramoyl-L-alanyl-D-glutamate contacts are provided by residues 158-159 (TT), Ser-185, and Arg-195. Lys-227 bears the N6-carboxylysine mark.

Belongs to the MurCDEF family. MurE subfamily. Post-translationally, carboxylation is probably crucial for Mg(2+) binding and, consequently, for the gamma-phosphate positioning of ATP.

It localises to the cytoplasm. It participates in cell wall biogenesis; peptidoglycan biosynthesis. In terms of biological role, catalyzes the addition of an amino acid to the nucleotide precursor UDP-N-acetylmuramoyl-L-alanyl-D-glutamate (UMAG) in the biosynthesis of bacterial cell-wall peptidoglycan. The polypeptide is UDP-N-acetylmuramyl-tripeptide synthetase (Treponema pallidum (strain Nichols)).